Consider the following 1054-residue polypeptide: Translation initiation factor IF-2 (1054 aa).

Disordered stretches follow at residues 48-390 (RSKL…LDLD) and 409-458 (LARP…GTEP). Over residues 65-76 (KPPSESLPPEPP) the composition is skewed to pro residues. Positions 160-169 (SEATQKPETV) are enriched in polar residues. The span at 179–193 (SESAAAKASGSEPSP) shows a compositional bias: low complexity. 2 stretches are compositionally biased toward pro residues: residues 221 to 235 (PQKA…PSEA) and 304 to 316 (PTRP…PPEP). Residues 365-378 (RAARVQAKRKRSRR) are compositionally biased toward basic residues. Residues 421–437 (PPAATAAPPARPRPAAR) are compositionally biased toward low complexity. The tr-type G domain maps to 545–718 (SRPPVVTIMG…LLVADVAELQ (174 aa)). A G1 region spans residues 554 to 561 (GHVDHGKT). A GTP-binding site is contributed by 554–561 (GHVDHGKT). The tract at residues 579-583 (GITQR) is G2. Residues 604–607 (DTPG) are G3. Residues 604-608 (DTPGH) and 658-661 (NKID) contribute to the GTP site. The tract at residues 658 to 661 (NKID) is G4. The tract at residues 694–696 (SAL) is G5.

This sequence belongs to the TRAFAC class translation factor GTPase superfamily. Classic translation factor GTPase family. IF-2 subfamily.

The protein resides in the cytoplasm. In terms of biological role, one of the essential components for the initiation of protein synthesis. Protects formylmethionyl-tRNA from spontaneous hydrolysis and promotes its binding to the 30S ribosomal subunits. Also involved in the hydrolysis of GTP during the formation of the 70S ribosomal complex. This is Translation initiation factor IF-2 from Synechococcus sp. (strain JA-2-3B'a(2-13)) (Cyanobacteria bacterium Yellowstone B-Prime).